Reading from the N-terminus, the 102-residue chain is Large ribosomal subunit protein bL21 (102 aa).

It belongs to the bacterial ribosomal protein bL21 family. As to quaternary structure, part of the 50S ribosomal subunit. Contacts protein L20.

Functionally, this protein binds to 23S rRNA in the presence of protein L20. In Desulfovibrio desulfuricans (strain ATCC 27774 / DSM 6949 / MB), this protein is Large ribosomal subunit protein bL21.